We begin with the raw amino-acid sequence, 83 residues long: Cell division topological specificity factor (83 aa).

It belongs to the MinE family.

Prevents the cell division inhibition by proteins MinC and MinD at internal division sites while permitting inhibition at polar sites. This ensures cell division at the proper site by restricting the formation of a division septum at the midpoint of the long axis of the cell. This Buchnera aphidicola subsp. Baizongia pistaciae (strain Bp) protein is Cell division topological specificity factor.